The primary structure comprises 347 residues: NADH-ubiquinone oxidoreductase chain 2 (347 aa).

Transmembrane regions (helical) follow at residues 1–21 (MNPL…AIVA), 25–45 (HWLM…PILM), 59–79 (YFLT…MNLV), 111–131 (FHFW…LILL), 149–169 (INLD…GWGG), 178–198 (IMAY…AYNP), 201–221 (TLLN…MFML), 237–257 (MPLL…LPPL), 276–296 (VILP…YMRL), and 326–346 (LSPL…LALL).

Belongs to the complex I subunit 2 family. As to quaternary structure, core subunit of respiratory chain NADH dehydrogenase (Complex I) which is composed of 45 different subunits. Interacts with TMEM242.

Its subcellular location is the mitochondrion inner membrane. It carries out the reaction a ubiquinone + NADH + 5 H(+)(in) = a ubiquinol + NAD(+) + 4 H(+)(out). Functionally, core subunit of the mitochondrial membrane respiratory chain NADH dehydrogenase (Complex I) which catalyzes electron transfer from NADH through the respiratory chain, using ubiquinone as an electron acceptor. Essential for the catalytic activity and assembly of complex I. The sequence is that of NADH-ubiquinone oxidoreductase chain 2 from Pteropus pumilus (Little golden-mantled flying fox).